The primary structure comprises 369 residues: DNA polymerase processivity factor (369 aa).

Residues 345-369 (IGSRKRGPSSPPFEREGKLAKVINQ) are disordered.

The protein belongs to the herpesviridae DNA polymerase processivity factor family. As to quaternary structure, interacts with the DNA polymerase catalytic subunit. Interacts with the origin-binding protein.

It localises to the host nucleus. In terms of biological role, plays an essential role in viral DNA replication by acting as the polymerase accessory subunit. Associates with the viral polymerase to increase its processivity and forms high-affinity direct interactions with DNA. Facilitates the origin-binding protein UL9 loading onto DNA thus increasing its ability to assemble into a functional complex capable of unwinding duplex DNA. The sequence is that of DNA polymerase processivity factor (MDV055) from Gallus gallus (Chicken).